Consider the following 161-residue polypeptide: Cell wall protein YLR042C (161 aa).

The N-terminal stretch at 1-24 is a signal peptide; sequence MKISQFGSLAFAPIVLLQLFIVQA. Residues Asn77, Asn104, and Asn120 are each glycosylated (N-linked (GlcNAc...) asparagine). Residues 111–139 are disordered; it reads FTPLPSSSRNETKSSQTTNTISSSTSTGG. The span at 123–137 shows a compositional bias: low complexity; sequence KSSQTTNTISSSTST. Gly139 carries GPI-anchor amidated glycine lipidation. The propeptide at 140-161 is removed in mature form; that stretch reads VGSVKPCLYFVLMLETIAYLFS.

The GPI-anchor is attached to the protein in the endoplasmic reticulum and serves to target the protein to the cell surface. There, the glucosamine-inositol phospholipid moiety is cleaved off and the GPI-modified mannoprotein is covalently attached via its lipidless GPI glycan remnant to the 1,6-beta-glucan of the outer cell wall layer.

It localises to the secreted. The protein localises to the cell wall. It is found in the membrane. The sequence is that of Cell wall protein YLR042C from Saccharomyces cerevisiae (strain ATCC 204508 / S288c) (Baker's yeast).